The following is a 61-amino-acid chain: Potassium channel toxin kappa-KTx 2.8 (61 aa).

A signal peptide spans 1–21 (GTVYVFLLLLAFGIFTDISNA). The propeptide occupies 22 to 35 (CSEQMDDEDSYEVE). 2 disulfides stabilise this stretch: C41/C59 and C45/C55.

This sequence belongs to the short scorpion toxin superfamily. Potassium channel inhibitor kappa-KTx family. Kappa-KTx 2 subfamily. As to expression, expressed by the venom gland.

It is found in the secreted. Voltage-gated potassium channel inhibitor (Kv) that acts on Kv1.3/KCNA3 and Kv7.1/KCNQ1. 1 uM of the toxin inhibits Kv1.3/KCNA3 currents by 35.1%, whereas 10 uM of the toxin inhibits Kv7.1/KCNQ1 currents by 44.9%. This Heterometrus petersii (Asian forest scorpion) protein is Potassium channel toxin kappa-KTx 2.8.